Consider the following 144-residue polypeptide: uncharacterized protein (144 aa).

An HTH lysR-type domain is found at 1 to 58 (MDLASLNAFIAVAETGSFSEAGERLHLTQPAVSKRIAALEQQLQVRLFDRLGREVRLT). Positions 18-38 (FSEAGERLHLTQPAVSKRIAA) form a DNA-binding region, H-T-H motif.

Belongs to the LysR transcriptional regulatory family.

This is an uncharacterized protein from Azotobacter vinelandii.